A 159-amino-acid polypeptide reads, in one-letter code: Protein-export protein SecB (159 aa).

Belongs to the SecB family. As to quaternary structure, homotetramer, a dimer of dimers. One homotetramer interacts with 1 SecA dimer.

It is found in the cytoplasm. Its function is as follows. One of the proteins required for the normal export of preproteins out of the cell cytoplasm. It is a molecular chaperone that binds to a subset of precursor proteins, maintaining them in a translocation-competent state. It also specifically binds to its receptor SecA. In Marinomonas sp. (strain MWYL1), this protein is Protein-export protein SecB.